Reading from the N-terminus, the 955-residue chain is Villin-5 (955 aa).

Gelsolin-like repeat units follow at residues 29–111 (FKPV…DKFL), 152–218 (VHVK…VEDG), 274–339 (LLHE…TVMF), and 644–712 (HFTQ…GSEP). 2 disordered regions span residues 741–783 (KGGG…RVRV) and 801–895 (NSRN…GLPV). Positions 756–776 (PTYSGRSTVQDKSQRSRSMSF) are enriched in polar residues. Low complexity predominate over residues 817-836 (PKSATPDSSSAPSKSSATAS). Over residues 842–864 (DRPKSVKDGSELEKPKQEEDAKE) the composition is skewed to basic and acidic residues. Positions 867 to 878 (NTMTSRVESLTI) are enriched in polar residues. In terms of domain architecture, HP spans 890–955 (DEGLPVYPYD…NRMKIALQLF (66 aa)).

This sequence belongs to the villin/gelsolin family.

It is found in the cytoplasm. It localises to the cytoskeleton. In terms of biological role, ca(2+)-regulated actin-binding protein. Binds actin microfilaments (MFs). Involved in actin filament bundling, severing and capping. Caps the barbed end of actin filaments and is able to sever them in a calcium-dependent manner. In Oryza sativa subsp. japonica (Rice), this protein is Villin-5.